The chain runs to 1375 residues: MEAPLQTGMMGTSSHGLATNSSGAKVAERDGFQDVLAPGEGSAGRICGAQPVPFVPQVLGVMIGAGVAVVVTAVLILLVVRRLRVPKTPAPDGPRYRFRKRDKVLFYGRKIMRKVSQSTSSLVDTSVSATSRPRMRKKLKMLNIAKKILRIQKETPTLQRKEPPPAVLEADLTEGDLANSHLPSEVLYMLKNVRVLGHFEKPLFLELCRHMVFQRLGQGDYVFRPGQPDASIYVVQDGLLELCLPGPDGKECVVKEVVPGDSVNSLLSILDVITGHQHPQRTVSARAARDSTVLRLPVEAFSAVFTKYPESLVRVVQIIMVRLQRVTFLALHNYLGLTNELFSHEIQPLRLFPSPGLPTRTSPVRGSKRMVSTSATDEPRETPGRPPDPTGAPLPGPTGDPVKPTSLETPSAPLLSRCVSMPGDISGLQGGPRSDFDMAYERGRISVSLQEEASGGSLAAPARTPTQEPREQPAGACEYSYCEDESATGGCPFGPYQGRQTSSIFEAAKQELAKLMRIEDPSLLNSRVLLHHAKAGTIIARQGDQDVSLHFVLWGCLHVYQRMIDKAEDVCLFVAQPGELVGQLAVLTGEPLIFTLRAQRDCTFLRISKSDFYEIMRAQPSVVLSAAHTVAARMSPFVRQMDFAIDWTAVEAGRALYRQGDRSDCTYIVLNGRLRSVIQRGSGKKELVGEYGRGDLIGVVEALTRQPRATTVHAVRDTELAKLPEGTLGHIKRRYPQVVTRLIHLLSQKILGNLQQLQGPFPAGSGLGVPPHSELTNPASNLATVAILPVCAEVPMVAFTLELQHALQAIGPTLLLNSDIIRARLGASALDSIQEFRLSGWLAQQEDAHRIVLYQTDASLTPWTVRCLRQADCILIVGLGDQEPTLGQLEQMLENTAVRALKQLVLLHREEGAGPTRTVEWLNMRSWCSGHLHLRCPRRLFSRRSPAKLHELYEKVFSRRADRHSDFSRLARVLTGNTIALVLGGGGARGCSHIGVLKALEEAGVPVDLVGGTSIGSFIGALYAEERSASRTKQRAREWAKSMTSVLEPVLDLTYPVTSMFTGSAFNRSIHRVFQDKQIEDLWLPYFNVTTDITASAMRVHKDGSLWRYVRASMTLSGYLPPLCDPKDGHLLMDGGYINNLPADIARSMGAKTVIAIDVGSQDETDLSTYGDSLSGWWLLWKRLNPWADKVKVPDMAEIQSRLAYVSCVRQLEVVKSSSYCEYLRPPIDCFKTMDFGKFDQIYDVGYQYGKAVFGGWSRGNVIEKMLTDRRSTDLNESRRADVLAFPSSGFTDLAEIVSRIEPPTSYVSDGCADGEESDCLTEYEEDAGPDCSRDEGGSPEGASPSTASEMEEEKSILRQRRCLPQEPPGSATDA.

The interval 1–20 is disordered; that stretch reads MEAPLQTGMMGTSSHGLATN. Over 1–59 the chain is Lumenal; the sequence is MEAPLQTGMMGTSSHGLATNSSGAKVAERDGFQDVLAPGEGSAGRICGAQPVPFVPQVL. Residues 9–20 are compositionally biased toward polar residues; the sequence is MMGTSSHGLATN. N-linked (GlcNAc...) asparagine glycosylation occurs at asparagine 20. Residues 60 to 80 traverse the membrane as a helical segment; it reads GVMIGAGVAVVVTAVLILLVV. Residues 81-1375 are Cytoplasmic-facing; that stretch reads RRLRVPKTPA…QEPPGSATDA (1295 aa). A nucleoside 3',5'-cyclic phosphate is bound at residue 195–322; sequence VLGHFEKPLF…VRVVQIIMVR (128 aa). Disordered stretches follow at residues 352-436 and 449-472; these read FPSP…RSDF and LQEEASGGSLAAPARTPTQEPREQ. Position 354 is a phosphoserine (serine 354). The span at 359-376 shows a compositional bias: polar residues; the sequence is TRTSPVRGSKRMVSTSAT. Threonine 361 carries the post-translational modification Phosphothreonine. Residues serine 362 and serine 372 each carry the phosphoserine modification. Residues 384-398 show a composition bias toward pro residues; that stretch reads GRPPDPTGAPLPGPT. At serine 420 the chain carries Phosphoserine. Threonine 464 bears the Phosphothreonine mark. A nucleoside 3',5'-cyclic phosphate-binding positions include 511-633 and 629-749; these read ELAK…VAAR and TVAA…LSQK. Positions 981 to 1147 constitute a PNPLA domain; sequence LVLGGGGARG…INNLPADIAR (167 aa). A GXGXXG motif is present at residues 985-990; it reads GGGARG. A GXSXG motif is present at residues 1012-1016; the sequence is GTSIG. Residue serine 1014 is the Nucleophile of the active site. Residue aspartate 1134 is the Proton acceptor of the active site. A DGA/G motif is present at residues 1134-1136; it reads DGG. Positions 1306–1375 are disordered; the sequence is SYVSDGCADG…QEPPGSATDA (70 aa). A compositionally biased stretch (acidic residues) spans 1313 to 1329; sequence ADGEESDCLTEYEEDAG.

Belongs to the NTE family. In terms of processing, glycosylated. In terms of tissue distribution, expressed in brain, placenta, kidney, neuron and skeletal muscle. Expressed in the developing eye, pituitary and brain.

It localises to the endoplasmic reticulum membrane. The enzyme catalyses a 1-acyl-sn-glycero-3-phosphocholine + H2O = sn-glycerol 3-phosphocholine + a fatty acid + H(+). It carries out the reaction 1-(9Z-octadecenoyl)-sn-glycero-3-phosphocholine + H2O = sn-glycerol 3-phosphocholine + (9Z)-octadecenoate + H(+). It catalyses the reaction 1-hexadecanoylglycerol + H2O = glycerol + hexadecanoate + H(+). The catalysed reaction is 2-hexadecanoylglycerol + H2O = glycerol + hexadecanoate + H(+). The enzyme catalyses 1-(9Z-octadecenoyl)-glycerol + H2O = glycerol + (9Z)-octadecenoate + H(+). It carries out the reaction 2-(9Z-octadecenoyl)-glycerol + H2O = glycerol + (9Z)-octadecenoate + H(+). It catalyses the reaction 2-(5Z,8Z,11Z,14Z-eicosatetraenoyl)-glycerol + H2O = glycerol + (5Z,8Z,11Z,14Z)-eicosatetraenoate + H(+). The catalysed reaction is 1-hexadecanoyl-sn-glycero-3-phosphate + H2O = sn-glycerol 3-phosphate + hexadecanoate + H(+). The enzyme catalyses 1-hexadecanoyl-sn-glycero-3-phosphocholine + H2O = sn-glycerol 3-phosphocholine + hexadecanoate + H(+). With respect to regulation, inhibited by a series a OPs such as mipafox (MPX), phenyl saligenin phosphate (PSP), phenyl dipentyl phosphinate (PDPP), diisopropyl fluorophosphate and paraoxon. Phospholipase B that deacylates intracellular phosphatidylcholine (PtdCho), generating glycerophosphocholine (GroPtdCho). This deacylation occurs at both sn-2 and sn-1 positions of PtdCho. Catalyzes the hydrolysis of several naturally occurring membrane-associated lipids. Hydrolyzes lysophospholipids and monoacylglycerols, preferring the 1-acyl to the 2-acyl isomer. Does not catalyze hydrolysis of di- or triacylglycerols or fatty acid amides. The sequence is that of Patatin-like phospholipase domain-containing protein 6 from Homo sapiens (Human).